The chain runs to 166 residues: Cyclic pyranopterin monophosphate synthase (166 aa).

Residues 83 to 85 and 121 to 122 each bind substrate; these read LCH and ME. Asp136 is an active-site residue.

It belongs to the MoaC family. As to quaternary structure, homohexamer; trimer of dimers.

The catalysed reaction is (8S)-3',8-cyclo-7,8-dihydroguanosine 5'-triphosphate = cyclic pyranopterin phosphate + diphosphate. The protein operates within cofactor biosynthesis; molybdopterin biosynthesis. Catalyzes the conversion of (8S)-3',8-cyclo-7,8-dihydroguanosine 5'-triphosphate to cyclic pyranopterin monophosphate (cPMP). This chain is Cyclic pyranopterin monophosphate synthase, found in Syntrophobacter fumaroxidans (strain DSM 10017 / MPOB).